The primary structure comprises 236 residues: Probable transcriptional activator protein TraR (236 aa).

Residues 169 to 234 (VLNPKQMLSP…QLVAIAKDRG (66 aa)) form the HTH luxR-type domain. The H-T-H motif DNA-binding region spans 193–212 (ASVTANLTGINARTVQHYLD).

It belongs to the autoinducer-regulated transcriptional regulatory protein family.

In terms of biological role, positive regulation of conjugal transfer. TraR activates target genes in the presence of AAI and also activates traR and traI themselves. In Sinorhizobium fredii (strain NBRC 101917 / NGR234), this protein is Probable transcriptional activator protein TraR (traR).